We begin with the raw amino-acid sequence, 230 residues long: Cytochrome c oxidase subunit 2 (230 aa).

At 1–14 (MAHPSQLGFQDAAS) the chain is on the mitochondrial intermembrane side. A helical transmembrane segment spans residues 15–45 (PVMEELIHFHDHTLMIVFLISTLVLYIITAM). Topologically, residues 46–59 (VSTKLTNKYILDSQ) are mitochondrial matrix. A helical membrane pass occupies residues 60–87 (EIEIVWTILPAIILIMIALPSLRILYLM). Topologically, residues 88-230 (DEINDPHLTI…TWSSLMLEEA (143 aa)) are mitochondrial intermembrane. His-161, Cys-196, Glu-198, Cys-200, His-204, and Met-207 together coordinate Cu cation. Position 198 (Glu-198) interacts with Mg(2+).

It belongs to the cytochrome c oxidase subunit 2 family. In terms of assembly, component of the cytochrome c oxidase (complex IV, CIV), a multisubunit enzyme composed of 14 subunits. The complex is composed of a catalytic core of 3 subunits MT-CO1, MT-CO2 and MT-CO3, encoded in the mitochondrial DNA, and 11 supernumerary subunits COX4I, COX5A, COX5B, COX6A, COX6B, COX6C, COX7A, COX7B, COX7C, COX8 and NDUFA4, which are encoded in the nuclear genome. The complex exists as a monomer or a dimer and forms supercomplexes (SCs) in the inner mitochondrial membrane with NADH-ubiquinone oxidoreductase (complex I, CI) and ubiquinol-cytochrome c oxidoreductase (cytochrome b-c1 complex, complex III, CIII), resulting in different assemblies (supercomplex SCI(1)III(2)IV(1) and megacomplex MCI(2)III(2)IV(2)). Found in a complex with TMEM177, COA6, COX18, COX20, SCO1 and SCO2. Interacts with TMEM177 in a COX20-dependent manner. Interacts with COX20. Interacts with COX16. It depends on Cu cation as a cofactor.

It is found in the mitochondrion inner membrane. The enzyme catalyses 4 Fe(II)-[cytochrome c] + O2 + 8 H(+)(in) = 4 Fe(III)-[cytochrome c] + 2 H2O + 4 H(+)(out). Its function is as follows. Component of the cytochrome c oxidase, the last enzyme in the mitochondrial electron transport chain which drives oxidative phosphorylation. The respiratory chain contains 3 multisubunit complexes succinate dehydrogenase (complex II, CII), ubiquinol-cytochrome c oxidoreductase (cytochrome b-c1 complex, complex III, CIII) and cytochrome c oxidase (complex IV, CIV), that cooperate to transfer electrons derived from NADH and succinate to molecular oxygen, creating an electrochemical gradient over the inner membrane that drives transmembrane transport and the ATP synthase. Cytochrome c oxidase is the component of the respiratory chain that catalyzes the reduction of oxygen to water. Electrons originating from reduced cytochrome c in the intermembrane space (IMS) are transferred via the dinuclear copper A center (CU(A)) of subunit 2 and heme A of subunit 1 to the active site in subunit 1, a binuclear center (BNC) formed by heme A3 and copper B (CU(B)). The BNC reduces molecular oxygen to 2 water molecules using 4 electrons from cytochrome c in the IMS and 4 protons from the mitochondrial matrix. The sequence is that of Cytochrome c oxidase subunit 2 (MT-CO2) from Scyliorhinus canicula (Small-spotted catshark).